Consider the following 571-residue polypeptide: 2-succinyl-5-enolpyruvyl-6-hydroxy-3-cyclohexene-1-carboxylate synthase (571 aa).

It belongs to the TPP enzyme family. MenD subfamily. In terms of assembly, homodimer. It depends on Mg(2+) as a cofactor. Mn(2+) is required as a cofactor. Thiamine diphosphate serves as cofactor.

The catalysed reaction is isochorismate + 2-oxoglutarate + H(+) = 5-enolpyruvoyl-6-hydroxy-2-succinyl-cyclohex-3-ene-1-carboxylate + CO2. It functions in the pathway quinol/quinone metabolism; 1,4-dihydroxy-2-naphthoate biosynthesis; 1,4-dihydroxy-2-naphthoate from chorismate: step 2/7. It participates in quinol/quinone metabolism; menaquinone biosynthesis. Functionally, catalyzes the thiamine diphosphate-dependent decarboxylation of 2-oxoglutarate and the subsequent addition of the resulting succinic semialdehyde-thiamine pyrophosphate anion to isochorismate to yield 2-succinyl-5-enolpyruvyl-6-hydroxy-3-cyclohexene-1-carboxylate (SEPHCHC). This chain is 2-succinyl-5-enolpyruvyl-6-hydroxy-3-cyclohexene-1-carboxylate synthase, found in Lysinibacillus sphaericus (strain C3-41).